Here is a 248-residue protein sequence, read N- to C-terminus: Protein-lysine N-methyltransferase EFM5 (248 aa).

Belongs to the class I-like SAM-binding methyltransferase superfamily. EFM5 family.

It localises to the cytoplasm. Its function is as follows. S-adenosyl-L-methionine-dependent protein-lysine N-methyltransferase that trimethylates elongation factor 1-alpha (TEF1 and TEF2) at 'Lys-79'. Required for replication of Brome mosaic virus (BMV). The protein is Protein-lysine N-methyltransferase EFM5 of Saccharomyces cerevisiae (strain ATCC 204508 / S288c) (Baker's yeast).